Here is a 356-residue protein sequence, read N- to C-terminus: Probable D-xylulose reductase A (356 aa).

Cysteine 45, histidine 70, and glutamate 71 together coordinate Zn(2+). 180–185 is an NAD(+) binding site; the sequence is GAGPVG.

Belongs to the zinc-containing alcohol dehydrogenase family. Zn(2+) is required as a cofactor.

It carries out the reaction xylitol + NAD(+) = D-xylulose + NADH + H(+). Its pathway is carbohydrate degradation; L-arabinose degradation via L-arabinitol; D-xylulose 5-phosphate from L-arabinose (fungal route): step 4/5. Functionally, xylitol dehydrogenase which catalyzes the conversion of xylitol to D-xylulose. Xylose is a major component of hemicelluloses such as xylan. Most fungi utilize D-xylose via three enzymatic reactions, xylose reductase (XR), xylitol dehydrogenase (XDH), and xylulokinase, to form xylulose 5-phosphate, which enters pentose phosphate pathway. The polypeptide is Probable D-xylulose reductase A (xdhA) (Arthroderma otae (strain ATCC MYA-4605 / CBS 113480) (Microsporum canis)).